We begin with the raw amino-acid sequence, 415 residues long: G2/mitotic-specific cyclin cig1 (415 aa).

Disordered stretches follow at residues proline 54–glutamate 74 and glutamate 86–histidine 118. Over residues isoleucine 57–aspartate 71 the composition is skewed to low complexity. At serine 96 the chain carries Phosphoserine.

It belongs to the cyclin family. Cyclin G subfamily.

Functionally, required for efficient passage of the G1/S transition. This chain is G2/mitotic-specific cyclin cig1 (cig1), found in Schizosaccharomyces pombe (strain 972 / ATCC 24843) (Fission yeast).